Here is a 106-residue protein sequence, read N- to C-terminus: Large ribosomal subunit protein uL24 (106 aa).

Belongs to the universal ribosomal protein uL24 family. In terms of assembly, part of the 50S ribosomal subunit.

Its function is as follows. One of two assembly initiator proteins, it binds directly to the 5'-end of the 23S rRNA, where it nucleates assembly of the 50S subunit. In terms of biological role, one of the proteins that surrounds the polypeptide exit tunnel on the outside of the subunit. The sequence is that of Large ribosomal subunit protein uL24 from Clostridium acetobutylicum (strain ATCC 824 / DSM 792 / JCM 1419 / IAM 19013 / LMG 5710 / NBRC 13948 / NRRL B-527 / VKM B-1787 / 2291 / W).